Consider the following 225-residue polypeptide: UPF0758 protein Shal_0429 (225 aa).

In terms of domain architecture, MPN spans 102–224 (ILSDPDLTRD…IVSFAERGWI (123 aa)). 3 residues coordinate Zn(2+): His-173, His-175, and Asp-186. The short motif at 173-186 (HNHPSGIAEPSTAD) is the JAMM motif element.

Belongs to the UPF0758 family.

The chain is UPF0758 protein Shal_0429 from Shewanella halifaxensis (strain HAW-EB4).